The sequence spans 215 residues: Small ribosomal subunit protein uS7 (215 aa).

This sequence belongs to the universal ribosomal protein uS7 family. In terms of assembly, part of the 30S ribosomal subunit.

Functionally, one of the primary rRNA binding proteins, it binds directly to 16S rRNA where it nucleates assembly of the head domain of the 30S subunit. Is located at the subunit interface close to the decoding center. The protein is Small ribosomal subunit protein uS7 of Thermococcus celer.